Reading from the N-terminus, the 116-residue chain is Large ribosomal subunit protein bL19 (116 aa).

Belongs to the bacterial ribosomal protein bL19 family.

In terms of biological role, this protein is located at the 30S-50S ribosomal subunit interface and may play a role in the structure and function of the aminoacyl-tRNA binding site. This is Large ribosomal subunit protein bL19 from Flavobacterium johnsoniae (strain ATCC 17061 / DSM 2064 / JCM 8514 / BCRC 14874 / CCUG 350202 / NBRC 14942 / NCIMB 11054 / UW101) (Cytophaga johnsonae).